Consider the following 874-residue polypeptide: Alanine--tRNA ligase (874 aa).

Positions 561, 565, 663, and 667 each coordinate Zn(2+).

The protein belongs to the class-II aminoacyl-tRNA synthetase family. Zn(2+) is required as a cofactor.

It is found in the cytoplasm. The enzyme catalyses tRNA(Ala) + L-alanine + ATP = L-alanyl-tRNA(Ala) + AMP + diphosphate. Its function is as follows. Catalyzes the attachment of alanine to tRNA(Ala) in a two-step reaction: alanine is first activated by ATP to form Ala-AMP and then transferred to the acceptor end of tRNA(Ala). Also edits incorrectly charged Ser-tRNA(Ala) and Gly-tRNA(Ala) via its editing domain. This is Alanine--tRNA ligase from Trichodesmium erythraeum (strain IMS101).